A 166-amino-acid chain; its full sequence is 3-hydroxyacyl-[acyl-carrier-protein] dehydratase FabZ (166 aa).

His72 is a catalytic residue.

The protein belongs to the thioester dehydratase family. FabZ subfamily.

The protein resides in the cytoplasm. The enzyme catalyses a (3R)-hydroxyacyl-[ACP] = a (2E)-enoyl-[ACP] + H2O. Its function is as follows. Involved in unsaturated fatty acids biosynthesis. Catalyzes the dehydration of short chain beta-hydroxyacyl-ACPs and long chain saturated and unsaturated beta-hydroxyacyl-ACPs. The protein is 3-hydroxyacyl-[acyl-carrier-protein] dehydratase FabZ of Synechococcus sp. (strain JA-2-3B'a(2-13)) (Cyanobacteria bacterium Yellowstone B-Prime).